A 358-amino-acid polypeptide reads, in one-letter code: DnaJ homolog subfamily B member 11 (358 aa).

A signal peptide spans Met1–Ala22. The J domain maps to Asp25 to Gly90. The residue at position 188 (Thr188) is a Phosphothreonine. Residue Asn261 is glycosylated (N-linked (GlcNAc...) asparagine).

As to quaternary structure, part of a large chaperone multiprotein complex comprising DNAJB11, HSP90B1, HSPA5, HYOU, PDIA2, PDIA4, PDIA6, PPIB, SDF2L1, UGGT1 and very small amounts of ERP29, but not, or at very low levels, CALR nor CANX. Binds to denatured substrates in an ATP-independent manner. Interacts via the J domain with HSPA5 in an ATP-dependent manner. In terms of processing, contains high-mannose Endo H-sensitive carbohydrates. Post-translationally, cys-169, Cys-171, Cys-193 and Cys-196 form intramolecular disulfide bonds. The preferential partner for each Cys is not known.

It localises to the endoplasmic reticulum lumen. Functionally, as a co-chaperone for HSPA5 it is required for proper folding, trafficking or degradation of proteins. Binds directly to both unfolded proteins that are substrates for ERAD and nascent unfolded peptide chains, but dissociates from the HSPA5-unfolded protein complex before folding is completed. May help recruiting HSPA5 and other chaperones to the substrate. Stimulates HSPA5 ATPase activity. It is necessary for maturation and correct trafficking of PKD1. The chain is DnaJ homolog subfamily B member 11 (Dnajb11) from Rattus norvegicus (Rat).